A 264-amino-acid polypeptide reads, in one-letter code: tRNA (guanine-N(1)-)-methyltransferase (264 aa).

S-adenosyl-L-methionine is bound by residues Gly125 and 145-150 (LGDFVL).

The protein belongs to the RNA methyltransferase TrmD family. As to quaternary structure, homodimer.

It localises to the cytoplasm. It carries out the reaction guanosine(37) in tRNA + S-adenosyl-L-methionine = N(1)-methylguanosine(37) in tRNA + S-adenosyl-L-homocysteine + H(+). In terms of biological role, specifically methylates guanosine-37 in various tRNAs. This is tRNA (guanine-N(1)-)-methyltransferase from Burkholderia mallei (strain NCTC 10247).